Here is a 37-residue protein sequence, read N- to C-terminus: MVEALLSGIVLGLIPITLLGLFVTAYLQYRRGDQLDL.

The helical transmembrane segment at 5–25 (LLSGIVLGLIPITLLGLFVTA) threads the bilayer.

This sequence belongs to the PetG family. The 4 large subunits of the cytochrome b6-f complex are cytochrome b6, subunit IV (17 kDa polypeptide, PetD), cytochrome f and the Rieske protein, while the 4 small subunits are PetG, PetL, PetM and PetN. The complex functions as a dimer.

The protein localises to the plastid. The protein resides in the chloroplast thylakoid membrane. Component of the cytochrome b6-f complex, which mediates electron transfer between photosystem II (PSII) and photosystem I (PSI), cyclic electron flow around PSI, and state transitions. PetG is required for either the stability or assembly of the cytochrome b6-f complex. The polypeptide is Cytochrome b6-f complex subunit 5 (Marchantia polymorpha (Common liverwort)).